The chain runs to 166 residues: Small ribosomal subunit protein uS5 (166 aa).

The region spanning 11 to 74 (LNEKLIAVNR…EKARRNMFTI (64 aa)) is the S5 DRBM domain.

This sequence belongs to the universal ribosomal protein uS5 family. Part of the 30S ribosomal subunit. Contacts proteins S4 and S8.

Its function is as follows. With S4 and S12 plays an important role in translational accuracy. In terms of biological role, located at the back of the 30S subunit body where it stabilizes the conformation of the head with respect to the body. This is Small ribosomal subunit protein uS5 from Aliivibrio fischeri (strain ATCC 700601 / ES114) (Vibrio fischeri).